Consider the following 175-residue polypeptide: Peptide deformylase 1 (175 aa).

Fe cation contacts are provided by Cys99 and His141. Glu142 is an active-site residue. His145 provides a ligand contact to Fe cation.

It belongs to the polypeptide deformylase family. The cofactor is Fe(2+).

The catalysed reaction is N-terminal N-formyl-L-methionyl-[peptide] + H2O = N-terminal L-methionyl-[peptide] + formate. Its function is as follows. Removes the formyl group from the N-terminal Met of newly synthesized proteins. Requires at least a dipeptide for an efficient rate of reaction. N-terminal L-methionine is a prerequisite for activity but the enzyme has broad specificity at other positions. The chain is Peptide deformylase 1 from Rickettsia conorii (strain ATCC VR-613 / Malish 7).